Reading from the N-terminus, the 586-residue chain is Probable zinc metalloprotease EGY3, chloroplastic (586 aa).

The transit peptide at 1-54 directs the protein to the chloroplast; it reads MSSSSLVTSLLFSSSSSSNTATSTSSRRSFSLFSKNQYCKPSPLRRSSSLLLVR. Positions 62–73 are enriched in basic and acidic residues; sequence EEKAAPAAESHH. Residues 62-118 form a disordered region; sequence EEKAAPAAESHHAGGGQDDAATASHHAVEGENGVADADGGGVKKSKEELEEEEQQEV. A coiled-coil region spans residues 103–195; the sequence is VKKSKEELEE…NTFKALDLNK (93 aa). 7 consecutive transmembrane segments (helical) span residues 287–307, 318–338, 389–409, 427–447, 454–474, 506–526, and 550–570; these read LSAV…SGFF, VSDV…SEIA, ASAY…DGSL, PLLS…GNVL, VGVP…VTSL, VALG…WGLF, and YAWG…NGGG.

It belongs to the peptidase M50B family.

Its subcellular location is the plastid. The protein resides in the chloroplast membrane. Its function is as follows. Probable membrane-associated metalloprotease that may be involved in chloroplast development. The sequence is that of Probable zinc metalloprotease EGY3, chloroplastic (EGY3) from Oryza sativa subsp. indica (Rice).